The primary structure comprises 157 residues: Transcriptional repressor NrdR (157 aa).

Residues 1-21 (MRCPYCSSEDSQVKDSRPAED) are disordered. A zinc finger lies at 3 to 34 (CPYCSSEDSQVKDSRPAEDGNAIRRRRICPDC). Residues 11–21 (SQVKDSRPAED) are compositionally biased toward basic and acidic residues. The 91-residue stretch at 49–139 (LMIIKKTGRK…VYRDFSHAED (91 aa)) folds into the ATP-cone domain.

Belongs to the NrdR family. Zn(2+) serves as cofactor.

Negatively regulates transcription of bacterial ribonucleotide reductase nrd genes and operons by binding to NrdR-boxes. In Sinorhizobium fredii (strain NBRC 101917 / NGR234), this protein is Transcriptional repressor NrdR.